We begin with the raw amino-acid sequence, 59 residues long: Large ribosomal subunit protein uL30 (59 aa).

It belongs to the universal ribosomal protein uL30 family. In terms of assembly, part of the 50S ribosomal subunit.

This chain is Large ribosomal subunit protein uL30, found in Buchnera aphidicola subsp. Acyrthosiphon pisum (strain 5A).